Here is a 179-residue protein sequence, read N- to C-terminus: Acireductone dioxygenase (179 aa).

Residues His88, His90, Glu94, and His133 each contribute to the Fe(2+) site. 4 residues coordinate Ni(2+): His88, His90, Glu94, and His133.

Belongs to the acireductone dioxygenase (ARD) family. In terms of assembly, monomer. Interacts with MMP14. Fe(2+) serves as cofactor. Ni(2+) is required as a cofactor.

It is found in the cytoplasm. It localises to the nucleus. The protein localises to the cell membrane. It catalyses the reaction 1,2-dihydroxy-5-(methylsulfanyl)pent-1-en-3-one + O2 = 4-methylsulfanyl-2-oxobutanoate + formate + 2 H(+). It carries out the reaction 1,2-dihydroxy-5-(methylsulfanyl)pent-1-en-3-one + O2 = 3-(methylsulfanyl)propanoate + CO + formate + 2 H(+). The protein operates within amino-acid biosynthesis; L-methionine biosynthesis via salvage pathway; L-methionine from S-methyl-5-thio-alpha-D-ribose 1-phosphate: step 5/6. Functionally, catalyzes 2 different reactions between oxygen and the acireductone 1,2-dihydroxy-3-keto-5-methylthiopentene (DHK-MTPene) depending upon the metal bound in the active site. Fe-containing acireductone dioxygenase (Fe-ARD) produces formate and 2-keto-4-methylthiobutyrate (KMTB), the alpha-ketoacid precursor of methionine in the methionine recycle pathway. Ni-containing acireductone dioxygenase (Ni-ARD) produces methylthiopropionate, carbon monoxide and formate, and does not lie on the methionine recycle pathway. The polypeptide is Acireductone dioxygenase (adi1) (Xenopus laevis (African clawed frog)).